Reading from the N-terminus, the 184-residue chain is NADH-quinone oxidoreductase subunit B (184 aa).

[4Fe-4S] cluster-binding residues include C63, C64, C128, and C158.

The protein belongs to the complex I 20 kDa subunit family. In terms of assembly, NDH-1 is composed of 14 different subunits. Subunits NuoB, C, D, E, F, and G constitute the peripheral sector of the complex. [4Fe-4S] cluster is required as a cofactor.

It is found in the cell inner membrane. The catalysed reaction is a quinone + NADH + 5 H(+)(in) = a quinol + NAD(+) + 4 H(+)(out). Functionally, NDH-1 shuttles electrons from NADH, via FMN and iron-sulfur (Fe-S) centers, to quinones in the respiratory chain. Couples the redox reaction to proton translocation (for every two electrons transferred, four hydrogen ions are translocated across the cytoplasmic membrane), and thus conserves the redox energy in a proton gradient. The sequence is that of NADH-quinone oxidoreductase subunit B from Stenotrophomonas maltophilia (strain R551-3).